The sequence spans 345 residues: MGEFMNSGMGIILTIAAQGLLVIAFVMISLLFLVYGDRKIWAAVQLRRGPNVVGAFGLLQTVADAAKYIFKEVVVPAGVDRPVFFLAPLISFVLAVLAWAVIPFSPGWVLSDINVAILFVFAASSLEVYGVIMGGWASNSKYPFLGSLRSAAQMISYEVSLGLIIIGIIISTGSMNLSHIVEAQDGAFGLFNWYWLPHLPMVALFFISALAETNRPPFDLPEAESELVAGFQVEYSSTPFLLFMAGEYIAIFLMCALMSLLFFGGWLSPIPGLPDGVFWMVAKMAFFFFLFAMVKAIVPRYRYDQLMRIGWKVFLPFSLGWVVLVAFLAKFEVFGGFWARWAMGG.

9 consecutive transmembrane segments (helical) span residues 11 to 31 (IILT…ISLL), 50 to 70 (PNVV…KYIF), 84 to 104 (FFLA…VIPF), 115 to 135 (VAIL…IMGG), 161 to 181 (LGLI…SHIV), 187 to 207 (AFGL…LFFI), 248 to 268 (YIAI…GWLS), 277 to 297 (VFWM…VKAI), and 309 to 329 (IGWK…AFLA).

It belongs to the complex I subunit 1 family. In terms of assembly, NDH-1 is composed of 14 different subunits. Subunits NuoA, H, J, K, L, M, N constitute the membrane sector of the complex.

The protein resides in the cell inner membrane. The enzyme catalyses a quinone + NADH + 5 H(+)(in) = a quinol + NAD(+) + 4 H(+)(out). In terms of biological role, NDH-1 shuttles electrons from NADH, via FMN and iron-sulfur (Fe-S) centers, to quinones in the respiratory chain. The immediate electron acceptor for the enzyme in this species is believed to be ubiquinone. Couples the redox reaction to proton translocation (for every two electrons transferred, four hydrogen ions are translocated across the cytoplasmic membrane), and thus conserves the redox energy in a proton gradient. This subunit may bind ubiquinone. This is NADH-quinone oxidoreductase subunit H 1 from Cereibacter sphaeroides (strain ATCC 17023 / DSM 158 / JCM 6121 / CCUG 31486 / LMG 2827 / NBRC 12203 / NCIMB 8253 / ATH 2.4.1.) (Rhodobacter sphaeroides).